Consider the following 89-residue polypeptide: Putative antitoxin VapB42 (89 aa).

In terms of biological role, possibly the antitoxin component of a type II toxin-antitoxin (TA) system. Its cognate toxin is VapC42 (Potential). This chain is Putative antitoxin VapB42 (vapB42), found in Mycobacterium tuberculosis (strain CDC 1551 / Oshkosh).